We begin with the raw amino-acid sequence, 92 residues long: Small ribosomal subunit protein bS20 (92 aa).

It belongs to the bacterial ribosomal protein bS20 family.

Functionally, binds directly to 16S ribosomal RNA. The chain is Small ribosomal subunit protein bS20 from Thermosipho africanus (strain TCF52B).